The chain runs to 298 residues: MMKNLDQNFDAILITGPTASGKSALALRLARERNGVVINADSMQVYDTLRVLTARPSDHEMEGVPHRLYGHVPAGSAYSTGEWLRDISGLLSDLRGEGRFPVIVGGTGLYFKALTGGLSDMPAIPDDLREGLRARLIEEGAAKLHAELVSRDPSMAQMLQPGDGQRIVRALEVLEATGKSIRDFQRASGPMIIDPERAQKFIVLPERPVLHDRINRRFEAMMDSGAVEEVQALLALNLAPDATAMKAIGVAQIADMLTGRMGAAEVIEKSAAATRQYAKRQMTWFRNQMGDDWTRIQP.

Position 16-23 (16-23 (GPTASGKS)) interacts with ATP. Residue 18–23 (TASGKS) participates in substrate binding. Interaction with substrate tRNA stretches follow at residues 41–44 (DSMQ) and 165–169 (QRIVR).

Belongs to the IPP transferase family. In terms of assembly, monomer. It depends on Mg(2+) as a cofactor.

It carries out the reaction adenosine(37) in tRNA + dimethylallyl diphosphate = N(6)-dimethylallyladenosine(37) in tRNA + diphosphate. Functionally, catalyzes the transfer of a dimethylallyl group onto the adenine at position 37 in tRNAs that read codons beginning with uridine, leading to the formation of N6-(dimethylallyl)adenosine (i(6)A). The sequence is that of tRNA dimethylallyltransferase from Rhizobium radiobacter (Agrobacterium tumefaciens).